Reading from the N-terminus, the 461-residue chain is Flavin-containing monooxygenase FMO GS-OX4 (461 aa).

17–22 contributes to the FAD binding site; that stretch reads GAGAAG. 211 to 216 lines the NADP(+) pocket; sequence GNFASG.

The protein belongs to the FMO family.

The enzyme catalyses a (Z)-omega-(methylsulfanyl)-N-sulfo-alkylhydroximate S-glucoside + NADPH + O2 + H(+) = a (Z)-omega-(methylsulfinyl)-alkyl-glucosinolate + NADP(+) + H2O. Catalyzes the conversion of methylthioalkyl glucosinolates of any chain length into methylsulfinylalkyl glucosinolates. This Arabidopsis thaliana (Mouse-ear cress) protein is Flavin-containing monooxygenase FMO GS-OX4 (FMOGS-OX4).